A 111-amino-acid chain; its full sequence is Elevenin (111 aa).

Positions 1–24 are cleaved as a signal peptide; the sequence is MAPSQKALLVLVLSMLLTASDSRA. A disulfide bridge connects residues cysteine 29 and cysteine 38. Residues 44-111 constitute a propeptide that is removed on maturation; sequence KRGGDSLSVG…TEQLDRLLTL (68 aa).

It belongs to the elevenin family. Monomer. In terms of tissue distribution, expressed by the venom duct.

The protein resides in the secreted. In terms of biological role, may mimic the function of prey elevenin neuropeptide. In vivo, intracranial injection in mice induces hyperactivity. The polypeptide is Elevenin (Conus ebraeus (Hebrew cone)).